Consider the following 255-residue polypeptide: Type III pantothenate kinase (255 aa).

6–13 (DVGNTNIV) provides a ligand contact to ATP. Substrate-binding positions include Tyr-100 and 107–110 (GADR). Catalysis depends on Asp-109, which acts as the Proton acceptor. Residue Asp-129 participates in K(+) binding. Thr-132 provides a ligand contact to ATP. Thr-184 serves as a coordination point for substrate.

It belongs to the type III pantothenate kinase family. Homodimer. Requires NH4(+) as cofactor. K(+) serves as cofactor.

The protein resides in the cytoplasm. It catalyses the reaction (R)-pantothenate + ATP = (R)-4'-phosphopantothenate + ADP + H(+). The protein operates within cofactor biosynthesis; coenzyme A biosynthesis; CoA from (R)-pantothenate: step 1/5. Catalyzes the phosphorylation of pantothenate (Pan), the first step in CoA biosynthesis. The chain is Type III pantothenate kinase from Caldanaerobacter subterraneus subsp. tengcongensis (strain DSM 15242 / JCM 11007 / NBRC 100824 / MB4) (Thermoanaerobacter tengcongensis).